The chain runs to 387 residues: Deoxyhypusine synthase (387 aa).

Residues 108–112 (SNLIS), 134–136 (SAG), E140, and D257 each bind NAD(+). 139–140 (EE) serves as a coordination point for spermidine. D262 serves as a coordination point for spermidine. G304 lines the NAD(+) pocket. Position 309 (H309) interacts with spermidine. An NAD(+)-binding site is contributed by 329–330 (TG). Spermidine is bound by residues 335-337 (GSD) and 344-350 (EAVSWGK). Catalysis depends on K350, which acts as the Nucleophile. 363–364 (DV) provides a ligand contact to NAD(+).

The protein belongs to the deoxyhypusine synthase family. As to quaternary structure, homotetramer. The cofactor is NAD(+).

It carries out the reaction [eIF5A protein]-L-lysine + spermidine = [eIF5A protein]-deoxyhypusine + propane-1,3-diamine. It participates in protein modification; eIF5A hypusination. In terms of biological role, catalyzes the NAD-dependent oxidative cleavage of spermidine and the subsequent transfer of the butylamine moiety of spermidine to the epsilon-amino group of a specific lysine residue of the eIF-5A precursor protein to form the intermediate deoxyhypusine residue. In Saccharomyces cerevisiae (strain ATCC 204508 / S288c) (Baker's yeast), this protein is Deoxyhypusine synthase.